We begin with the raw amino-acid sequence, 221 residues long: Extracellular superoxide dismutase [Cu-Zn] (221 aa).

The signal sequence occupies residues M1–S19. A glycan (N-linked (GlcNAc...) asparagine) is linked at N56. Cu cation is bound by residues H70, H72, and H87. C81 and C170 are oxidised to a cystine. H87, H95, H104, and D107 together coordinate Zn(2+). H144 serves as a coordination point for Cu cation.

It belongs to the Cu-Zn superoxide dismutase family. Cu cation serves as cofactor. Requires Zn(2+) as cofactor. In terms of tissue distribution, isoform 2 is preferentially expressed in eggs.

It is found in the secreted. Its subcellular location is the extracellular space. The protein localises to the membrane. The catalysed reaction is 2 superoxide + 2 H(+) = H2O2 + O2. Functionally, protects cells against oxidative stress by converting superoxide radicals to hydrogen peroxide. Oxidative stress is involved in various biological dysfunctions and senescence. The sequence is that of Extracellular superoxide dismutase [Cu-Zn] (sod-4) from Caenorhabditis elegans.